We begin with the raw amino-acid sequence, 522 residues long: Sugar carrier protein A (522 aa).

Residues 1–22 (MAGGSLAPAGVAKERAEQYQGK) are Cytoplasmic-facing. Transmembrane regions (helical) follow at residues 23–43 (VTFA…IFGY), 87–107 (AFTS…GPIT), 121–141 (ISFL…MLLL), 144–164 (IMLG…LSEM), 173–193 (LNIM…MVNY), 205–225 (LSLG…LLLP), 286–306 (LVMA…IILF), 322–342 (ALYS…ISIA), 351–371 (FLLI…AIIL), 384–404 (SFSV…GWSW), 430–450 (AVNL…LCAF), and 453–473 (GIFL…YIFL). At 474–522 (PETKGVPIEEMIFLWRKHWFWKKIVPGQPEVDDSRESMEMGEAVASRIK) the chain is on the cytoplasmic side.

This sequence belongs to the major facilitator superfamily. Sugar transporter (TC 2.A.1.1) family.

The protein resides in the membrane. The polypeptide is Sugar carrier protein A (STA) (Ricinus communis (Castor bean)).